The chain runs to 111 residues: Large ribosomal subunit protein uL22 (111 aa).

The protein belongs to the universal ribosomal protein uL22 family. In terms of assembly, part of the 50S ribosomal subunit.

This protein binds specifically to 23S rRNA; its binding is stimulated by other ribosomal proteins, e.g. L4, L17, and L20. It is important during the early stages of 50S assembly. It makes multiple contacts with different domains of the 23S rRNA in the assembled 50S subunit and ribosome. In terms of biological role, the globular domain of the protein is located near the polypeptide exit tunnel on the outside of the subunit, while an extended beta-hairpin is found that lines the wall of the exit tunnel in the center of the 70S ribosome. This Clostridium beijerinckii (strain ATCC 51743 / NCIMB 8052) (Clostridium acetobutylicum) protein is Large ribosomal subunit protein uL22.